Reading from the N-terminus, the 219-residue chain is Probable nicotinate-nucleotide adenylyltransferase (219 aa).

It belongs to the NadD family.

The catalysed reaction is nicotinate beta-D-ribonucleotide + ATP + H(+) = deamido-NAD(+) + diphosphate. It functions in the pathway cofactor biosynthesis; NAD(+) biosynthesis; deamido-NAD(+) from nicotinate D-ribonucleotide: step 1/1. Functionally, catalyzes the reversible adenylation of nicotinate mononucleotide (NaMN) to nicotinic acid adenine dinucleotide (NaAD). In Pseudomonas entomophila (strain L48), this protein is Probable nicotinate-nucleotide adenylyltransferase.